A 140-amino-acid chain; its full sequence is Endoribonuclease YbeY (140 aa).

Zn(2+)-binding residues include His99, His103, and His109.

It belongs to the endoribonuclease YbeY family. Zn(2+) serves as cofactor.

Its subcellular location is the cytoplasm. In terms of biological role, single strand-specific metallo-endoribonuclease involved in late-stage 70S ribosome quality control and in maturation of the 3' terminus of the 16S rRNA. The chain is Endoribonuclease YbeY from Wolinella succinogenes (strain ATCC 29543 / DSM 1740 / CCUG 13145 / JCM 31913 / LMG 7466 / NCTC 11488 / FDC 602W) (Vibrio succinogenes).